The chain runs to 219 residues: Orotate phosphoribosyltransferase (219 aa).

A 5-phospho-alpha-D-ribose 1-diphosphate-binding site is contributed by K26. 34–35 is an orotate binding site; that stretch reads FF. 5-phospho-alpha-D-ribose 1-diphosphate-binding positions include 72 to 73, R98, K99, K102, H104, and 124 to 132; these read YK and DDVITAGTA. Orotate contacts are provided by T128 and R156.

It belongs to the purine/pyrimidine phosphoribosyltransferase family. PyrE subfamily. Homodimer. Mg(2+) is required as a cofactor.

The enzyme catalyses orotidine 5'-phosphate + diphosphate = orotate + 5-phospho-alpha-D-ribose 1-diphosphate. It participates in pyrimidine metabolism; UMP biosynthesis via de novo pathway; UMP from orotate: step 1/2. Functionally, catalyzes the transfer of a ribosyl phosphate group from 5-phosphoribose 1-diphosphate to orotate, leading to the formation of orotidine monophosphate (OMP). The polypeptide is Orotate phosphoribosyltransferase (Xylella fastidiosa (strain M23)).